Here is a 186-residue protein sequence, read N- to C-terminus: MRIGLFGGSFDPIHLGHLLAASQAQEVLCLDRVLFVVAARPPHKVPVAPAEARYEMTLLAVAEDPRFTVSRLELDRPGPSYTVDTLREARRLFPQDELFFITGADAYRDVLTWKEGERLPEYATLVAVARPGYPLEEAPLPVVPLFVPEVGISSTEIRRRLKEGRSVRYWVPRAVEVYIEKHGLYR.

Belongs to the NadD family.

It catalyses the reaction nicotinate beta-D-ribonucleotide + ATP + H(+) = deamido-NAD(+) + diphosphate. It functions in the pathway cofactor biosynthesis; NAD(+) biosynthesis; deamido-NAD(+) from nicotinate D-ribonucleotide: step 1/1. Its function is as follows. Catalyzes the reversible adenylation of nicotinate mononucleotide (NaMN) to nicotinic acid adenine dinucleotide (NaAD). The protein is Probable nicotinate-nucleotide adenylyltransferase of Thermus thermophilus (strain ATCC 27634 / DSM 579 / HB8).